A 152-amino-acid polypeptide reads, in one-letter code: Ribosome maturation factor RimP (152 aa).

This sequence belongs to the RimP family.

The protein resides in the cytoplasm. In terms of biological role, required for maturation of 30S ribosomal subunits. The sequence is that of Ribosome maturation factor RimP from Aeromonas hydrophila subsp. hydrophila (strain ATCC 7966 / DSM 30187 / BCRC 13018 / CCUG 14551 / JCM 1027 / KCTC 2358 / NCIMB 9240 / NCTC 8049).